A 495-amino-acid chain; its full sequence is Chromosomal replication initiator protein DnaA (495 aa).

The interval M1–Q91 is domain I, interacts with DnaA modulators. The interval Q91–V154 is domain II. The domain III, AAA+ region stretch occupies residues S155–A371. ATP is bound by residues G199, G201, K202, and T203. The segment at S372–R495 is domain IV, binds dsDNA.

The protein belongs to the DnaA family. In terms of assembly, oligomerizes as a right-handed, spiral filament on DNA at oriC.

The protein resides in the cytoplasm. Functionally, plays an essential role in the initiation and regulation of chromosomal replication. ATP-DnaA binds to the origin of replication (oriC) to initiate formation of the DNA replication initiation complex once per cell cycle. Binds the DnaA box (a 9 base pair repeat at the origin) and separates the double-stranded (ds)DNA. Forms a right-handed helical filament on oriC DNA; dsDNA binds to the exterior of the filament while single-stranded (ss)DNA is stabiized in the filament's interior. The ATP-DnaA-oriC complex binds and stabilizes one strand of the AT-rich DNA unwinding element (DUE), permitting loading of DNA polymerase. After initiation quickly degrades to an ADP-DnaA complex that is not apt for DNA replication. Binds acidic phospholipids. This is Chromosomal replication initiator protein DnaA from Mycobacterium sp. (strain JLS).